The chain runs to 777 residues: DNA ligase (777 aa).

Residues 35-39 (DAEYD), 84-85 (SL), and glutamate 116 contribute to the NAD(+) site. Lysine 118 serves as the catalytic N6-AMP-lysine intermediate. Arginine 139, glutamate 176, lysine 293, and lysine 317 together coordinate NAD(+). 4 residues coordinate Zn(2+): cysteine 411, cysteine 414, cysteine 429, and cysteine 435. One can recognise a BRCT domain in the interval 691–777 (MESQPLEGQT…NQHGIDPGAL (87 aa)).

Belongs to the NAD-dependent DNA ligase family. LigA subfamily. The cofactor is Mg(2+). It depends on Mn(2+) as a cofactor.

The enzyme catalyses NAD(+) + (deoxyribonucleotide)n-3'-hydroxyl + 5'-phospho-(deoxyribonucleotide)m = (deoxyribonucleotide)n+m + AMP + beta-nicotinamide D-nucleotide.. Its function is as follows. DNA ligase that catalyzes the formation of phosphodiester linkages between 5'-phosphoryl and 3'-hydroxyl groups in double-stranded DNA using NAD as a coenzyme and as the energy source for the reaction. It is essential for DNA replication and repair of damaged DNA. The chain is DNA ligase from Alcanivorax borkumensis (strain ATCC 700651 / DSM 11573 / NCIMB 13689 / SK2).